Reading from the N-terminus, the 124-residue chain is Large ribosomal subunit protein bL20 (124 aa).

The protein belongs to the bacterial ribosomal protein bL20 family.

Functionally, binds directly to 23S ribosomal RNA and is necessary for the in vitro assembly process of the 50S ribosomal subunit. It is not involved in the protein synthesizing functions of that subunit. The polypeptide is Large ribosomal subunit protein bL20 (Ehrlichia canis (strain Jake)).